The following is a 397-amino-acid chain: Aromatic-amino-acid aminotransferase (397 aa).

The substrate site is built by glycine 34, tyrosine 66, tryptophan 131, and asparagine 184. Position 247 is an N6-(pyridoxal phosphate)lysine (lysine 247). Substrate contacts are provided by arginine 281 and arginine 375.

Belongs to the class-I pyridoxal-phosphate-dependent aminotransferase family. In terms of assembly, homodimer. Pyridoxal 5'-phosphate is required as a cofactor.

It is found in the cytoplasm. The enzyme catalyses an aromatic L-alpha-amino acid + 2-oxoglutarate = an aromatic oxo-acid + L-glutamate. It carries out the reaction (3S)-3-methyl-L-phenylalanine + 2-oxoglutarate = (3S)-2-oxo-3-phenylbutanoate + L-glutamate. It participates in amino-acid biosynthesis; L-phenylalanine biosynthesis; L-phenylalanine from phenylpyruvate (ArAT route): step 1/1. Its pathway is amino-acid biosynthesis; L-tyrosine biosynthesis; L-tyrosine from (4-hydroxyphenyl)pyruvate: step 1/1. Functionally, broad-specificity enzyme that catalyzes the transamination of 2-ketoisocaproate, p-hydroxyphenylpyruvate, and phenylpyruvate to yield leucine, tyrosine, and phenylalanine, respectively. In vitro, is able to catalyze the conversion of beta-methyl phenylpyruvate to the nonproteinogenic amino acid (2S,3S)-beta-methyl-phenylalanine, a building block of the antibiotic mannopeptimycin produced by Streptomyces hygroscopicus NRRL3085. The polypeptide is Aromatic-amino-acid aminotransferase (tyrB) (Escherichia coli (strain K12)).